A 228-amino-acid polypeptide reads, in one-letter code: Immunogenic protein MPB64 (228 aa).

The first 23 residues, 1–23 (MRIKIFMLVTAVVLLCCSGVATA), serve as a signal peptide directing secretion.

Belongs to the RsiV family.

Its subcellular location is the secreted. The protein is Immunogenic protein MPB64 (mpb64) of Mycobacterium bovis (strain ATCC BAA-935 / AF2122/97).